Reading from the N-terminus, the 482-residue chain is tRNA sulfurtransferase (482 aa).

The 105-residue stretch at 61 to 165 (PAIRDALTRI…NDRLLLVKGR (105 aa)) folds into the THUMP domain. ATP-binding positions include 183-184 (LI), K265, G287, and Q296. C344 and C456 are oxidised to a cystine. Residues 404-482 (FGANDAILDI…GFSNVKVYRP (79 aa)) form the Rhodanese domain. C456 serves as the catalytic Cysteine persulfide intermediate.

The protein belongs to the ThiI family.

It is found in the cytoplasm. It carries out the reaction [ThiI sulfur-carrier protein]-S-sulfanyl-L-cysteine + a uridine in tRNA + 2 reduced [2Fe-2S]-[ferredoxin] + ATP + H(+) = [ThiI sulfur-carrier protein]-L-cysteine + a 4-thiouridine in tRNA + 2 oxidized [2Fe-2S]-[ferredoxin] + AMP + diphosphate. It catalyses the reaction [ThiS sulfur-carrier protein]-C-terminal Gly-Gly-AMP + S-sulfanyl-L-cysteinyl-[cysteine desulfurase] + AH2 = [ThiS sulfur-carrier protein]-C-terminal-Gly-aminoethanethioate + L-cysteinyl-[cysteine desulfurase] + A + AMP + 2 H(+). It functions in the pathway cofactor biosynthesis; thiamine diphosphate biosynthesis. Its function is as follows. Catalyzes the ATP-dependent transfer of a sulfur to tRNA to produce 4-thiouridine in position 8 of tRNAs, which functions as a near-UV photosensor. Also catalyzes the transfer of sulfur to the sulfur carrier protein ThiS, forming ThiS-thiocarboxylate. This is a step in the synthesis of thiazole, in the thiamine biosynthesis pathway. The sulfur is donated as persulfide by IscS. This is tRNA sulfurtransferase from Klebsiella pneumoniae subsp. pneumoniae (strain ATCC 700721 / MGH 78578).